We begin with the raw amino-acid sequence, 296 residues long: Nucleotide-binding protein SPJ_1472 (296 aa).

13–20 (GMSGAGKT) is an ATP binding site. Residue 63 to 66 (DMRS) coordinates GTP.

The protein belongs to the RapZ-like family.

In terms of biological role, displays ATPase and GTPase activities. The chain is Nucleotide-binding protein SPJ_1472 from Streptococcus pneumoniae (strain JJA).